A 97-amino-acid chain; its full sequence is Nucleoid-associated protein HPAG1_0033 (97 aa).

The protein belongs to the YbaB/EbfC family. As to quaternary structure, homodimer.

It localises to the cytoplasm. Its subcellular location is the nucleoid. Binds to DNA and alters its conformation. May be involved in regulation of gene expression, nucleoid organization and DNA protection. This chain is Nucleoid-associated protein HPAG1_0033, found in Helicobacter pylori (strain HPAG1).